A 446-amino-acid chain; its full sequence is Ubiquitin carboxyl-terminal hydrolase MINDY-3 (446 aa).

The active-site Nucleophile is Cys-51. The segment covering Asp-117–Pro-128 has biased composition (basic and acidic residues). The interval Asp-117 to Pro-137 is disordered. Residue His-288 is the Proton acceptor of the active site.

The protein belongs to the MINDY deubiquitinase family. FAM188 subfamily.

The protein resides in the nucleus. The enzyme catalyses Thiol-dependent hydrolysis of ester, thioester, amide, peptide and isopeptide bonds formed by the C-terminal Gly of ubiquitin (a 76-residue protein attached to proteins as an intracellular targeting signal).. Its function is as follows. Hydrolase that can remove 'Lys-48'-linked conjugated ubiquitin from proteins. In Danio rerio (Zebrafish), this protein is Ubiquitin carboxyl-terminal hydrolase MINDY-3 (mindy3).